The primary structure comprises 382 residues: 2-heptyl-3-hydroxy-4(1H)-quinolone synthase (382 aa).

The protein belongs to the 3-hydroxybenzoate 6-hydroxylase family.

The catalysed reaction is 2-heptyl-4(1H)-quinolone + NADH + O2 + H(+) = 2-heptyl-3-hydroxy-4(1H)-quinolone + NAD(+) + H2O. Involved in the terminal step of the biosynthesis of quinolone which in addition to serve as a potent signal for quorum sensing, chelates iron and promotes the formation of membrane vesicles (MVs). Catalyzes the hydroxylation of 2-heptyl-4-quinolone (C7-HHQ) to yield 2-heptyl-3-hydroxy-4-quinolone (PQS). The protein is 2-heptyl-3-hydroxy-4(1H)-quinolone synthase (pqsH) of Pseudomonas aeruginosa (strain ATCC 15692 / DSM 22644 / CIP 104116 / JCM 14847 / LMG 12228 / 1C / PRS 101 / PAO1).